The chain runs to 218 residues: Orotate phosphoribosyltransferase (218 aa).

Position 26 (Lys26) interacts with 5-phospho-alpha-D-ribose 1-diphosphate. 34–35 (FF) contributes to the orotate binding site. Residues 72 to 73 (YK), Arg99, Lys100, Lys103, His105, and 124 to 132 (DDVITAGTA) contribute to the 5-phospho-alpha-D-ribose 1-diphosphate site. Orotate contacts are provided by Thr128 and Arg156.

Belongs to the purine/pyrimidine phosphoribosyltransferase family. PyrE subfamily. In terms of assembly, homodimer. Mg(2+) serves as cofactor.

It catalyses the reaction orotidine 5'-phosphate + diphosphate = orotate + 5-phospho-alpha-D-ribose 1-diphosphate. The protein operates within pyrimidine metabolism; UMP biosynthesis via de novo pathway; UMP from orotate: step 1/2. Its function is as follows. Catalyzes the transfer of a ribosyl phosphate group from 5-phosphoribose 1-diphosphate to orotate, leading to the formation of orotidine monophosphate (OMP). This is Orotate phosphoribosyltransferase from Hamiltonella defensa subsp. Acyrthosiphon pisum (strain 5AT).